Here is a 306-residue protein sequence, read N- to C-terminus: MNEFINFDEISRKTWQNLYNTSIAPLTHDELESIRSLNDEISLQDVEDVYLPLIHLLRLYKKNLEDMSYSKGLFLQKIVKTPPLIIGISGSVAVGKSTTARLLQLLLSRAFPKLTVDLVTTDGFLYTTNDLKNMGILDRKGFPESYDMEKLTSFLYHVKNGEKFEVPIYSHETYDILPNQSQIIDSPDILIVEGINVLQNPQNQLLYISDFYDFSIYVDADEKLIEKWYLERFDSLLKLAKYDQTNFYHQFTKMPEDKVINLAREIWARVNRVNLREYIEPTRNRAEIILHKTENHYIDKIYLKKF.

ATP is bound at residue 90 to 97; that stretch reads GSVAVGKS.

The protein belongs to the prokaryotic pantothenate kinase family.

The protein localises to the cytoplasm. The enzyme catalyses (R)-pantothenate + ATP = (R)-4'-phosphopantothenate + ADP + H(+). It participates in cofactor biosynthesis; coenzyme A biosynthesis; CoA from (R)-pantothenate: step 1/5. The sequence is that of Pantothenate kinase (coaA) from Lactococcus lactis subsp. lactis (strain IL1403) (Streptococcus lactis).